The following is a 314-amino-acid chain: 2,3-dihydroxyphenylpropionate/2,3-dihydroxicinnamic acid 1,2-dioxygenase (314 aa).

His115 acts as the Proton donor in catalysis. His179 serves as the catalytic Proton acceptor.

It belongs to the LigB/MhpB extradiol dioxygenase family. In terms of assembly, homotetramer. Fe(2+) serves as cofactor.

The catalysed reaction is 3-(2,3-dihydroxyphenyl)propanoate + O2 = (2Z,4E)-2-hydroxy-6-oxonona-2,4-dienedioate + H(+). The enzyme catalyses (2E)-3-(2,3-dihydroxyphenyl)prop-2-enoate + O2 = (2Z,4E,7E)-2-hydroxy-6-oxonona-2,4,7-trienedioate + H(+). It participates in aromatic compound metabolism; 3-phenylpropanoate degradation. In terms of biological role, catalyzes the non-heme iron(II)-dependent oxidative cleavage of 2,3-dihydroxyphenylpropionic acid and 2,3-dihydroxicinnamic acid into 2-hydroxy-6-ketononadienedioate and 2-hydroxy-6-ketononatrienedioate, respectively. In Klebsiella pneumoniae subsp. pneumoniae (strain ATCC 700721 / MGH 78578), this protein is 2,3-dihydroxyphenylpropionate/2,3-dihydroxicinnamic acid 1,2-dioxygenase.